The chain runs to 95 residues: Protein TusB (95 aa).

It belongs to the DsrH/TusB family. Heterohexamer, formed by a dimer of trimers. The hexameric TusBCD complex contains 2 copies each of TusB, TusC and TusD. The TusBCD complex interacts with TusE.

The protein resides in the cytoplasm. In terms of biological role, part of a sulfur-relay system required for 2-thiolation of 5-methylaminomethyl-2-thiouridine (mnm(5)s(2)U) at tRNA wobble positions. This is Protein TusB from Escherichia coli (strain ATCC 8739 / DSM 1576 / NBRC 3972 / NCIMB 8545 / WDCM 00012 / Crooks).